A 424-amino-acid polypeptide reads, in one-letter code: Hemagglutinin-esterase (424 aa).

Positions 1 to 16 are cleaved as a signal peptide; the sequence is MFLLPRFILVSCIIGS. Residues 7 to 127 are esterase domain 1; the sequence is FILVSCIIGS…SNDIWMQNKG (121 aa). Topologically, residues 17–392 are virion surface; sequence LGFYNPPTNV…PICVYDPLPV (376 aa). The active-site Nucleophile is the serine 40. A disulfide bridge links cysteine 44 with cysteine 65. N-linked (GlcNAc...) asparagine; by host glycans are attached at residues asparagine 54, asparagine 89, asparagine 114, asparagine 153, asparagine 236, and asparagine 301. 3 disulfides stabilise this stretch: cysteine 113/cysteine 162, cysteine 197/cysteine 276, and cysteine 205/cysteine 249. The receptor binding stretch occupies residues 128–266; the sequence is LFYTQVYKNM…GNYLAISNEL (139 aa). The tract at residues 267–379 is esterase domain 2; that stretch reads LLTVPTKAIC…RCPTAADINN (113 aa). Cysteine 307 and cysteine 312 form a disulfide bridge. N-linked (GlcNAc...) asparagine; by host glycosylation is present at asparagine 316. Residues aspartate 326 and histidine 329 each act as charge relay system in the active site. Cysteine 347 and cysteine 371 are oxidised to a cystine. The N-linked (GlcNAc...) asparagine; by host glycan is linked to asparagine 358. Residues 393 to 413 traverse the membrane as a helical segment; sequence ILLGILLGVAVIIIVVLLLYF. Residues 414 to 424 are Intravirion-facing; the sequence is MVDNGTRLHDA. The N-linked (GlcNAc...) asparagine; by host glycan is linked to asparagine 417.

This sequence belongs to the influenza type C/coronaviruses hemagglutinin-esterase family. Homodimer; disulfide-linked. Forms a complex with the M protein in the pre-Golgi. Associates then with S-M complex to form a ternary complex S-M-HE. In terms of processing, N-glycosylated in the host RER.

It localises to the virion membrane. Its subcellular location is the host cell membrane. It carries out the reaction N-acetyl-9-O-acetylneuraminate + H2O = N-acetylneuraminate + acetate + H(+). The catalysed reaction is N-acetyl-4-O-acetylneuraminate + H2O = N-acetylneuraminate + acetate + H(+). In terms of biological role, structural protein that makes short spikes at the surface of the virus. Contains receptor binding and receptor-destroying activities. Mediates de-O-acetylation of N-acetyl-4-O-acetylneuraminic acid, which is probably the receptor determinant recognized by the virus on the surface of erythrocytes and susceptible cells. This receptor-destroying activity is important for virus release as it probably helps preventing self-aggregation and ensures the efficient spread of the progeny virus from cell to cell. May serve as a secondary viral attachment protein for initiating infection, the spike protein being the major one. May become a target for both the humoral and the cellular branches of the immune system. In Homo sapiens (Human), this protein is Hemagglutinin-esterase.